Reading from the N-terminus, the 347-residue chain is NADH-ubiquinone oxidoreductase chain 2 (347 aa).

Helical transmembrane passes span 3 to 23 (PMIL…VMMS), 25 to 45 (HWFL…PVLM), 59 to 79 (YFLT…INLI), 96 to 116 (TLLT…FWVP), 122 to 142 (VSLN…LSLL), 149 to 169 (VNTN…GWGG), 178 to 198 (IMAY…IYNP), 201 to 221 (SLLN…LLMF), 239 to 259 (IITT…PLSG), 274 to 294 (DSVI…FFYM), and 326 to 346 (MTSL…AMIL).

This sequence belongs to the complex I subunit 2 family. As to quaternary structure, core subunit of respiratory chain NADH dehydrogenase (Complex I) which is composed of 45 different subunits. Interacts with TMEM242.

Its subcellular location is the mitochondrion inner membrane. The catalysed reaction is a ubiquinone + NADH + 5 H(+)(in) = a ubiquinol + NAD(+) + 4 H(+)(out). Core subunit of the mitochondrial membrane respiratory chain NADH dehydrogenase (Complex I) which catalyzes electron transfer from NADH through the respiratory chain, using ubiquinone as an electron acceptor. Essential for the catalytic activity and assembly of complex I. This chain is NADH-ubiquinone oxidoreductase chain 2, found in Sylvisorex johnstoni (Johnston's forest shrew).